A 358-amino-acid chain; its full sequence is Malate dehydrogenase 2, glyoxysomal (358 aa).

The transit peptide at 1 to 38 (MEFRGDANKRIAMISAHLQPSFTPQMEAKNSVMGRENC) directs the protein to the glyoxysome. NAD(+) is bound by residues 53–59 (GAAGGIG) and aspartate 79. Positions 126 and 132 each coordinate substrate. Residues asparagine 139 and 162–164 (ISN) each bind NAD(+). Asparagine 164 and arginine 198 together coordinate substrate. Catalysis depends on histidine 222, which acts as the Proton acceptor. Methionine 273 is an NAD(+) binding site.

The protein belongs to the LDH/MDH superfamily. MDH type 1 family. As to quaternary structure, homodimer.

The protein resides in the glyoxysome. The catalysed reaction is (S)-malate + NAD(+) = oxaloacetate + NADH + H(+). The protein is Malate dehydrogenase 2, glyoxysomal (MDH2) of Brassica napus (Rape).